The primary structure comprises 908 residues: Chloride channel protein 2 (908 aa).

Topologically, residues Met-1–Val-95 are cytoplasmic. Positions Gln-24–Ala-42 are essential for channel gating by both voltage and cell volume. The residue at position 28 (Thr-28) is a Phosphothreonine. Residues Glu-44 to Trp-57 form a modulates channel gating by both voltage and cell volume region. Transmembrane regions (helical) follow at residues Gly-96–Trp-129 and Ile-138–Leu-163. Positions Gly-169–Pro-173 match the Selectivity filter part_1 motif. Ser-170 serves as a coordination point for chloride. An intramembrane region (helical) is located at residues Ile-172–Leu-179. 2 helical membrane passes run Leu-188 to Ser-206 and Glu-213 to Leu-231. Positions Gly-211–Pro-215 match the Selectivity filter part_2 motif. 2 intramembrane regions (helical) span residues Met-247 to Cys-259 and Pro-263 to Ile-271. The next 5 helical transmembrane spans lie at Tyr-283 to Trp-303, Leu-329 to Met-357, Phe-366 to Leu-385, Ala-437 to Ala-457, and Gly-465 to Trp-488. A Selectivity filter part_3 motif is present at residues Gly-465 to Pro-469. Phe-467 lines the chloride pocket. Residues Gly-505 to Val-519 constitute an intramembrane region (helical). Residues Thr-520–His-521 constitute an intramembrane region (note=Loop between two helices). The segment at residues Thr-522–Thr-533 is an intramembrane region (helical). An intramembrane region (note=Loop between two helices) is located at residues Gly-534–His-538. The chain crosses the membrane as a helical span at residues Ile-539–Leu-556. Residues Gln-557 to Gln-908 are Cytoplasmic-facing. Chloride is bound at residue Tyr-561. Residues Met-592 to Pro-650 enclose the CBS 1 domain. Residues Arg-653–Lys-662 show a composition bias toward basic residues. Positions Arg-653–Thr-722 are disordered. Residues Ser-666 to Ser-680 show a composition bias toward low complexity. Polar residues predominate over residues Ile-681 to Ser-690. Residues Gln-698–Leu-707 are compositionally biased toward basic residues. Residues Pro-711–Thr-722 are compositionally biased toward polar residues. Phosphoserine is present on Ser-768. The region spanning Ile-800–Val-860 is the CBS 2 domain. Residues Leu-822–Leu-823 carry the Basolateral membrane sorting motif. Residues Ser-866–Gln-908 form a disordered region.

It belongs to the chloride channel (TC 2.A.49) family. ClC-2/CLCN2 subfamily. As to quaternary structure, homodimer. Interacts with auxiliary subunit HEPACAM. Post-translationally, phosphorylated. Activated by dephosphorylation. Expressed in the adrenal gland and brain. Expressed in intestinal epithelium (at protein level). Expressed in salivary gland (at protein level).

The protein localises to the cell membrane. It is found in the myelin membrane. Its subcellular location is the basolateral cell membrane. The protein resides in the cell projection. It localises to the dendritic spine membrane. The protein localises to the axon. The catalysed reaction is chloride(in) = chloride(out). It catalyses the reaction thiocyanate(in) = thiocyanate(out). The enzyme catalyses bromide(in) = bromide(out). It carries out the reaction nitrate(in) = nitrate(out). The catalysed reaction is iodide(out) = iodide(in). With respect to regulation, common gate kinetics are down-regulated by intracellular ATP. Inhibited by AK-42, a derivative of meclofenamate. Inhibited by Cd(2+). Inhibited by Zn(2+) and PKC activation. Inhibited at acidic pH. CCLN2:HEPACAM channel conductance is up-regulated upon hypo-osmolarity. Functionally, voltage-gated and osmosensitive chloride channel. Forms a homodimeric channel where each subunit has its own ion conduction pathway. Conducts double-barreled currents controlled by two types of gates, two fast glutamate gates that control each subunit independently and a slow common gate that opens and shuts off both subunits simultaneously. Displays inward rectification currents activated upon membrane hyperpolarization and extracellular hypotonicity. Contributes to chloride conductance involved in neuron excitability. In hippocampal neurons, generates a significant part of resting membrane conductance and provides an additional chloride efflux pathway to prevent chloride accumulation in dendrites upon GABA receptor activation. In glia, associates with the auxiliary subunit HEPACAM/GlialCAM at astrocytic processes and myelinated fiber tracts where it may regulate transcellular chloride flux buffering extracellular chloride and potassium concentrations. Regulates aldosterone production in adrenal glands. The opening of CLCN2 channels at hyperpolarized membrane potentials in the glomerulosa causes cell membrane depolarization, activation of voltage-gated calcium channels and increased expression of aldosterone synthase, the rate-limiting enzyme for aldosterone biosynthesis. Contributes to chloride conductance in retinal pigment epithelium involved in phagocytosis of shed photoreceptor outer segments and photoreceptor renewal. Conducts chloride currents at the basolateral membrane of epithelial cells with a role in chloride reabsorption rather than secretion. Permeable to small monovalent anions with chloride &gt; thiocyanate &gt; bromide &gt; nitrate &gt; iodide ion selectivity. This is Chloride channel protein 2 (Clcn2) from Mus musculus (Mouse).